We begin with the raw amino-acid sequence, 91 residues long: DNA-binding protein HU (91 aa).

It belongs to the bacterial histone-like protein family. In terms of assembly, homodimer.

Functionally, histone-like DNA-binding protein which is capable of wrapping DNA to stabilize it, and thus to prevent its denaturation under extreme environmental conditions. This is DNA-binding protein HU (hup) from Streptococcus thermophilus.